The following is a 302-amino-acid chain: UDP-N-acetylenolpyruvoylglucosamine reductase (302 aa).

One can recognise an FAD-binding PCMH-type domain in the interval 27 to 192 (KVGGAVDYLA…LSAKFALRPG (166 aa)). R171 is an active-site residue. The active-site Proton donor is the S221. E291 is a catalytic residue.

The protein belongs to the MurB family. The cofactor is FAD.

It is found in the cytoplasm. The catalysed reaction is UDP-N-acetyl-alpha-D-muramate + NADP(+) = UDP-N-acetyl-3-O-(1-carboxyvinyl)-alpha-D-glucosamine + NADPH + H(+). It functions in the pathway cell wall biogenesis; peptidoglycan biosynthesis. Cell wall formation. The polypeptide is UDP-N-acetylenolpyruvoylglucosamine reductase (Streptococcus suis (strain 98HAH33)).